A 282-amino-acid polypeptide reads, in one-letter code: Elongation factor Ts (282 aa).

An involved in Mg(2+) ion dislocation from EF-Tu region spans residues 79-82 (TDFV).

The protein belongs to the EF-Ts family.

Its subcellular location is the cytoplasm. Its function is as follows. Associates with the EF-Tu.GDP complex and induces the exchange of GDP to GTP. It remains bound to the aminoacyl-tRNA.EF-Tu.GTP complex up to the GTP hydrolysis stage on the ribosome. The protein is Elongation factor Ts of Shewanella sediminis (strain HAW-EB3).